A 1750-amino-acid chain; its full sequence is Protein TIC 214 (1750 aa).

6 helical membrane passes run lysine 12–isoleucine 32, phenylalanine 69–leucine 89, isoleucine 97–alanine 117, leucine 129–leucine 149, phenylalanine 177–isoleucine 197, and isoleucine 216–cysteine 236. The span at arginine 260–serine 277 shows a compositional bias: basic and acidic residues. Disordered stretches follow at residues arginine 260–proline 282, alanine 617–serine 638, serine 718–glutamate 738, arginine 1205–valine 1225, and glutamate 1419–glutamate 1512. The segment covering alanine 617–aspartate 629 has biased composition (low complexity). Positions lysine 727 to glutamate 738 are enriched in basic and acidic residues. The segment covering threonine 1420–glutamate 1512 has biased composition (basic and acidic residues).

It belongs to the TIC214 family. As to quaternary structure, part of the Tic complex.

It localises to the plastid. It is found in the chloroplast inner membrane. Functionally, involved in protein precursor import into chloroplasts. May be part of an intermediate translocation complex acting as a protein-conducting channel at the inner envelope. The chain is Protein TIC 214 from Cuscuta reflexa (Southern Asian dodder).